Consider the following 316-residue polypeptide: MADERGPINKSGPSSTYGATENNGESGGTRGAPATEDVIVIQDSGWYYIKFRFKEPFAEFLGTFILVAFGVGAIAQTVLSKGATGNWITIALGFGLGLALGIAVSGHYSGGHLNPAVTITLAIYRKFPWVKVPVYITAQVLGAFVAAAVIYLNYLPAIYNFAGDKRDVIGANATAGIFATYPQPFMSIGGAFFSEALGTFFLLFVILAMTDERNVPTTRIVAPITIGLTLTAIAISLGFETGFSLNAARDFGPRLFTFFIGYGVEVFTAYKFYFWIPLVAPIVGGLVAGFVYDSLLYWGEKSFLNKNVHHEHRAVA.

Residues 1 to 31 (MADERGPINKSGPSSTYGATENNGESGGTRG) are disordered. At 1–59 (MADERGPINKSGPSSTYGATENNGESGGTRGAPATEDVIVIQDSGWYYIKFRFKEPFAE) the chain is on the cytoplasmic side. Over residues 11–24 (SGPSSTYGATENNG) the composition is skewed to polar residues. The chain crosses the membrane as a helical span at residues 60–80 (FLGTFILVAFGVGAIAQTVLS). Residues 81 to 86 (KGATGN) are Extracellular-facing. A helical membrane pass occupies residues 87 to 107 (WITIALGFGLGLALGIAVSGH). Residues 108-131 (YSGGHLNPAVTITLAIYRKFPWVK) are Cytoplasmic-facing. The NPA 1 motif lies at 114–116 (NPA). A helical membrane pass occupies residues 132 to 152 (VPVYITAQVLGAFVAAAVIYL). Topologically, residues 153–187 (NYLPAIYNFAGDKRDVIGANATAGIFATYPQPFMS) are extracellular. Asparagine 172 carries N-linked (GlcNAc...) asparagine glycosylation. A helical transmembrane segment spans residues 188-208 (IGGAFFSEALGTFFLLFVILA). At 209-219 (MTDERNVPTTR) the chain is on the cytoplasmic side. A helical membrane pass occupies residues 220-240 (IVAPITIGLTLTAIAISLGFE). Residues 241–271 (TGFSLNAARDFGPRLFTFFIGYGVEVFTAYK) are Extracellular-facing. An NPA 2 motif is present at residues 246-248 (NAA). The chain crosses the membrane as a helical span at residues 272–292 (FYFWIPLVAPIVGGLVAGFVY). At 293–316 (DSLLYWGEKSFLNKNVHHEHRAVA) the chain is on the cytoplasmic side.

This sequence belongs to the MIP/aquaporin (TC 1.A.8) family.

The protein localises to the cell membrane. Its subcellular location is the membrane. The enzyme catalyses H2O(in) = H2O(out). It carries out the reaction glycerol(in) = glycerol(out). Its activity is regulated as follows. Polyethylene glycol (PEG) stimulates whereas glycerol inhibits the aquaporin activity. Functionally, water channel required to facilitate the transport of water across membranes. Stimulates plant drought tolerance by facilitating the transport of water from the arbuscular mycorrhiza fungus to host plants. The chain is Aquaglyceroporin-2 from Rhizophagus irregularis (Arbuscular mycorrhizal fungus).